We begin with the raw amino-acid sequence, 328 residues long: GMP reductase (328 aa).

C176 serves as the catalytic Thioimidate intermediate. Residue I205–I228 coordinates NADP(+).

The protein belongs to the IMPDH/GMPR family. GuaC type 2 subfamily.

The catalysed reaction is IMP + NH4(+) + NADP(+) = GMP + NADPH + 2 H(+). Its function is as follows. Catalyzes the irreversible NADPH-dependent deamination of GMP to IMP. It functions in the conversion of nucleobase, nucleoside and nucleotide derivatives of G to A nucleotides, and in maintaining the intracellular balance of A and G nucleotides. This chain is GMP reductase, found in Streptococcus pneumoniae serotype 2 (strain D39 / NCTC 7466).